The following is a 376-amino-acid chain: MKAGATSMWASCCGLLNEVMGTGAVRGQQAGFPGSTGPFRFTPSSDFPTYPPAATEGPNIVCKACGLSFSVFRKKHVCCDCKKDFCSLCSVSQENLRRCSTCHLLQETAFQRPQLMRLKVKDLRQYLLLRNIPTDTCREKEDLVDLVLCHRGLGSGDDLDSSSLNSSRSQTSSFFTQSLFSNYTPPSATVSSFQGELMDRDGAFRSEVLAQVQSEIASANTDDDDDDDDDDDDDEDDDDEQEEEEQNPGLSKKKARASLSDLSSLEEVEGMSVRQLKEILARNFVNYSGCCEKWELVEKVNRLYKENEENQKSYGERMQLQDEEDDSLCRICMDAVIDCVLLECGHMVTCTKCGKRMSECPICRQYVVRAVHVFKS.

An FYVE-type zinc finger spans residues 56–107 (EGPNIVCKACGLSFSVFRKKHVCCDCKKDFCSLCSVSQENLRRCSTCHLLQE). In terms of domain architecture, SAP 1 spans 115 to 134 (LMRLKVKDLRQYLLLRNIPT). Serine 169 carries the phosphoserine modification. A disordered region spans residues 216–256 (IASANTDDDDDDDDDDDDDEDDDDEQEEEEQNPGLSKKKAR). Acidic residues predominate over residues 221–246 (TDDDDDDDDDDDDDEDDDDEQEEEEQ). Serine 258 and serine 260 each carry phosphoserine. The SAP 2 domain maps to 268-282 (VEGMSVRQLKEILAR). An RING-type zinc finger spans residues 329-364 (CRICMDAVIDCVLLECGHMVTCTKCGKRMSECPICR).

In terms of assembly, interacts with CASP8 and CASP10. Interacts with p53/TP53; involved in p53/TP53 ubiquitination. Interacts (via RING-type zinc finger) with MDM2; the interaction stabilizes MDM2. Interacts (via RING-type zinc finger) with PPARGC1A. Interacts with NOD1. In terms of processing, autoubiquitinated (in vitro). Proteolytically cleaved by caspases upon induction of apoptosis by TNF.

It localises to the cell membrane. The protein localises to the endomembrane system. It is found in the nucleus. Its subcellular location is the nucleus speckle. The protein resides in the cytoplasm. It localises to the cytosol. It carries out the reaction S-ubiquitinyl-[E2 ubiquitin-conjugating enzyme]-L-cysteine + [acceptor protein]-L-lysine = [E2 ubiquitin-conjugating enzyme]-L-cysteine + N(6)-ubiquitinyl-[acceptor protein]-L-lysine.. It functions in the pathway protein modification; protein ubiquitination. E3 ubiquitin-protein ligase that regulates several biological processes through the ubiquitin-mediated proteasomal degradation of various target proteins. Ubiquitinates the caspases CASP8 and CASP10, promoting their proteasomal degradation, to negatively regulate cell death downstream of death domain receptors in the extrinsic pathway of apoptosis. May mediate 'Lys-48'-linked polyubiquitination of RIPK1 and its subsequent proteasomal degradation thereby indirectly regulating the tumor necrosis factor-mediated signaling pathway. Negatively regulates p53/TP53 through its direct ubiquitination and targeting to proteasomal degradation. Indirectly, may also negatively regulate p53/TP53 through ubiquitination and degradation of SFN. Mediates PPARGC1A proteasomal degradation probably through ubiquitination thereby indirectly regulating the metabolism of brown fat cells. Possibly involved in innate immunity, through 'Lys-48'-linked polyubiquitination of NOD1 and its subsequent proteasomal degradation. The protein is E3 ubiquitin-protein ligase RNF34 of Mus musculus (Mouse).